The following is a 574-amino-acid chain: Sorting nexin-33 (574 aa).

Residues 1–61 (MALKGRALYD…PASYVEIVRP (61 aa)) enclose the SH3 domain. A Phosphoserine modification is found at Ser-77. Residues 79-90 (GTQGSLYSSPSM) show a composition bias toward polar residues. The disordered stretch occupies residues 79-116 (GTQGSLYSSPSMASPARSGGGSGFLSNPGSFEDDDDDD). Ser-92 bears the Phosphoserine mark. The PX domain occupies 230–340 (FACSIEDPTK…HFLSCLDDKQ (111 aa)). In terms of domain architecture, BAR spans 371–574 (LQDVEDRVDT…EKTLHMYDHL (204 aa)).

It belongs to the sorting nexin family. As to quaternary structure, homodimer (via BAR domain). Interacts with ADAM15. Interacts with FASLG. Interacts (via SH3 domain) with DNM1 and DNM2. Interacts with WASL. Interacts with FCHSD1 (via the F-BAR domain). Phosphorylated. Detected in brain (at protein level).

It localises to the cytoplasm. The protein resides in the cytosol. The protein localises to the membrane. Its subcellular location is the cytoplasmic vesicle membrane. In terms of biological role, plays a role in the reorganization of the cytoskeleton, endocytosis and cellular vesicle trafficking via its interactions with membranes, WASL, DNM1 and DNM2. Acts both during interphase and at the end of mitotic cell divisions. Required for efficient progress through mitosis and cytokinesis. Required for normal formation of the cleavage furrow at the end of mitosis. Modulates endocytosis of cell-surface proteins, such as APP and PRNP; this then modulates the secretion of APP and PRNP peptides. Promotes membrane tubulation (in vitro). May promote the formation of macropinosomes. The protein is Sorting nexin-33 (Snx33) of Mus musculus (Mouse).